Consider the following 79-residue polypeptide: Acyl carrier protein (79 aa).

One can recognise a Carrier domain in the interval 2 to 77; sequence SDIEARVKKI…NAIDYANTHQ (76 aa). Serine 37 carries the O-(pantetheine 4'-phosphoryl)serine modification.

Belongs to the acyl carrier protein (ACP) family. In terms of processing, 4'-phosphopantetheine is transferred from CoA to a specific serine of apo-ACP by AcpS. This modification is essential for activity because fatty acids are bound in thioester linkage to the sulfhydryl of the prosthetic group.

It is found in the cytoplasm. It functions in the pathway lipid metabolism; fatty acid biosynthesis. Carrier of the growing fatty acid chain in fatty acid biosynthesis. The sequence is that of Acyl carrier protein from Paracidovorax citrulli (strain AAC00-1) (Acidovorax citrulli).